The primary structure comprises 1237 residues: Zinc finger protein ZFAT (1237 aa).

The segment at 12-35 (FMCKCCNLFSPNQSELVTHVSEKH) adopts a C2H2-type 1 zinc-finger fold. Residues 50 to 110 (RPLNTPENPN…GPLATEEGSR (61 aa)) form a disordered region. Residues 70–81 (MKRKRGRPKGST) show a composition bias toward basic residues. Residues 116-141 (LECSKCCRKFSNTRQLRKHICIIVLN) form a C2H2-type 2; degenerate zinc finger. Positions 147-188 (GDAGNESDLDLEKTYKEDDREKASKRPRAQKTEKVQKISGKE) are disordered. The segment covering 156 to 186 (DLEKTYKEDDREKASKRPRAQKTEKVQKISG) has biased composition (basic and acidic residues). C2H2-type zinc fingers lie at residues 271–293 (FTCE…LRIH), 299–321 (YKCS…LRKH), 326–349 (FACD…ERVH), 354–377 (QHCR…RDMH), 404–426 (YDCH…MLVH), 432–454 (FACE…VRKH), and 458–481 (YVCA…REVH). The Zn(2+) site is built by Cys273, Cys276, His289, His293, Cys301, Cys304, His317, His321, Cys328, Cys331, His344, His349, Cys356, Cys359, His372, His377, Cys406, Cys409, His422, and His426. 4 residues coordinate Zn(2+): Cys460, Cys463, His476, and His481. 2 disordered regions span residues 551 to 576 (VPGD…LSPC) and 601 to 671 (SDTS…CLRA). The span at 565–574 (TPQSESSSLS) shows a compositional bias: polar residues. Positions 601 to 617 (SDTSSAEPPAAAEATSD) are enriched in low complexity. 4 consecutive C2H2-type zinc fingers follow at residues 737–759 (LECE…VRTH), 765–788 (YYCS…IQKH), 793–817 (LKCP…LKVH), and 825–848 (YSCP…KTNH). Cys767, Cys770, His783, His788, Cys795, Cys800, His813, His817, Cys827, Cys830, His843, His848, Cys877, Cys880, His894, His898, Cys906, Cys909, His922, His926, Cys934, Cys937, His950, and Leu953 together coordinate Zn(2+). Residues 875 to 898 (MKCPYCDFYFMKNGSDLQRHIWAH) form a C2H2-type 14; degenerate zinc finger. 5 C2H2-type zinc fingers span residues 904–926 (FKCS…MNRH), 932–954 (HLCD…KLLH), 961–983 (FKCT…MEQH), 989–1012 (FRCA…NRKH), and 1036–1059 (LKCP…KNKH).

In terms of tissue distribution, detected in spleen and thymus but not in liver, muscle, heart, kidney, brain, bone marrow or pancreas. Expressed in CD19+, CD4+ and CD8+ lymphocytes but not in CD11b+ lymphocytes or peritoneal macrophages (at protein level).

It localises to the nucleus. The protein resides in the cytoplasm. It is found in the cytosol. Its function is as follows. May be involved in transcriptional regulation. Overexpression causes down-regulation of a number of genes involved in the immune response. Some genes are also up-regulated. In Mus musculus (Mouse), this protein is Zinc finger protein ZFAT (Zfat).